We begin with the raw amino-acid sequence, 354 residues long: Guanine nucleotide-binding protein G(o) subunit alpha (354 aa).

A lipid anchor (N-myristoyl glycine) is attached at G2. C3 carries the S-palmitoyl cysteine lipid modification. A G-alpha domain is found at 32-354 (KDIKLLLLGA…ANNLRGCGLY (323 aa)). Residues 35–48 (KLLLLGAGESGKST) are G1 motif. GTP-binding positions include 40–47 (GAGESGKS), 176–182 (LRTRVKT), 201–205 (DVGGQ), 270–273 (NKKD), and A326. The Mg(2+) site is built by S47 and T182. Residues 174–182 (DILRTRVKT) form a G2 motif region. Residues 197 to 206 (FKLFDVGGQR) form a G3 motif region. The G4 motif stretch occupies residues 266–273 (ILFLNKKD). The segment at 324 to 329 (TCATDT) is G5 motif.

The protein belongs to the G-alpha family. G(i/o/t/z) subfamily. As to quaternary structure, g proteins are composed of 3 units; alpha, beta and gamma. The alpha chain contains the guanine nucleotide binding site.

Its function is as follows. Guanine nucleotide-binding proteins (G proteins) are involved as modulators or transducers in various transmembrane signaling systems. The G(o) protein function is not clear. This is Guanine nucleotide-binding protein G(o) subunit alpha from Locusta migratoria (Migratory locust).